The sequence spans 358 residues: Alanine racemase (358 aa).

Lys34 serves as the catalytic Proton acceptor; specific for D-alanine. Residue Lys34 is modified to N6-(pyridoxal phosphate)lysine. Arg129 contacts substrate. Residue Tyr254 is the Proton acceptor; specific for L-alanine of the active site. Met302 lines the substrate pocket.

The protein belongs to the alanine racemase family. Pyridoxal 5'-phosphate is required as a cofactor.

It carries out the reaction L-alanine = D-alanine. Its pathway is amino-acid biosynthesis; D-alanine biosynthesis; D-alanine from L-alanine: step 1/1. In terms of biological role, catalyzes the interconversion of L-alanine and D-alanine. May also act on other amino acids. This chain is Alanine racemase (alr), found in Vibrio vulnificus (strain CMCP6).